We begin with the raw amino-acid sequence, 157 residues long: MLRQVLSSTSVRRLLVSPTRCMSGKQNVPDKIEYSTPPEIIDYEESPHLPVPEYPIRPDEPLETRKQRLLYQSRKRGMLENDLLLSTFVAKYLKDFDAEETAQYDQLINGVSNDWDIYYWATNTKPTPPEYDTDVMKLLKQHVKNTERVQRIRQPDL.

Residues 1 to 21 (MLRQVLSSTSVRRLLVSPTRC) constitute a mitochondrion transit peptide.

The protein belongs to the SDHAF2 family. As to quaternary structure, interacts with the flavoprotein subunit within the SDH catalytic dimer.

The protein localises to the mitochondrion matrix. Plays an essential role in the assembly of succinate dehydrogenase (SDH), an enzyme complex (also referred to as respiratory complex II) that is a component of both the tricarboxylic acid (TCA) cycle and the mitochondrial electron transport chain, and which couples the oxidation of succinate to fumarate with the reduction of ubiquinone (coenzyme Q) to ubiquinol. Required for flavinylation (covalent attachment of FAD) of the flavoprotein subunit of the SDH catalytic dimer. The sequence is that of Succinate dehydrogenase assembly factor 2-A, mitochondrial from Drosophila mojavensis (Fruit fly).